The chain runs to 351 residues: tRNA N6-adenosine threonylcarbamoyltransferase (351 aa).

Positions 111 and 115 each coordinate Fe cation. Residues 134 to 138 (LVSGG), Asp-167, Gly-180, and Asn-276 contribute to the substrate site. Residue Asp-304 participates in Fe cation binding.

This sequence belongs to the KAE1 / TsaD family. Requires Fe(2+) as cofactor.

It is found in the cytoplasm. The catalysed reaction is L-threonylcarbamoyladenylate + adenosine(37) in tRNA = N(6)-L-threonylcarbamoyladenosine(37) in tRNA + AMP + H(+). Required for the formation of a threonylcarbamoyl group on adenosine at position 37 (t(6)A37) in tRNAs that read codons beginning with adenine. Is involved in the transfer of the threonylcarbamoyl moiety of threonylcarbamoyl-AMP (TC-AMP) to the N6 group of A37, together with TsaE and TsaB. TsaD likely plays a direct catalytic role in this reaction. This is tRNA N6-adenosine threonylcarbamoyltransferase from Marinobacter nauticus (strain ATCC 700491 / DSM 11845 / VT8) (Marinobacter aquaeolei).